The following is a 242-amino-acid chain: Segregation and condensation protein A (242 aa).

It belongs to the ScpA family. As to quaternary structure, component of a cohesin-like complex composed of ScpA, ScpB and the Smc homodimer, in which ScpA and ScpB bind to the head domain of Smc. The presence of the three proteins is required for the association of the complex with DNA.

It is found in the cytoplasm. In terms of biological role, participates in chromosomal partition during cell division. May act via the formation of a condensin-like complex containing Smc and ScpB that pull DNA away from mid-cell into both cell halves. This Streptococcus pneumoniae serotype 19F (strain G54) protein is Segregation and condensation protein A.